The primary structure comprises 315 residues: Energy-coupling factor transporter ATP-binding protein EcfA2 (315 aa).

The ABC transporter domain maps to 31–275 (IILDNVSYTY…QELLSKIQIE (245 aa)). ATP is bound at residue 68–75 (GTTGSGKS).

Belongs to the ABC transporter superfamily. Energy-coupling factor EcfA family. As to quaternary structure, forms a stable energy-coupling factor (ECF) transporter complex composed of 2 membrane-embedded substrate-binding proteins (S component), 2 ATP-binding proteins (A component) and 2 transmembrane proteins (T component).

The protein resides in the cell membrane. ATP-binding (A) component of a common energy-coupling factor (ECF) ABC-transporter complex. Unlike classic ABC transporters this ECF transporter provides the energy necessary to transport a number of different substrates. This chain is Energy-coupling factor transporter ATP-binding protein EcfA2, found in Mesoplasma florum (strain ATCC 33453 / NBRC 100688 / NCTC 11704 / L1) (Acholeplasma florum).